Here is a 1118-residue protein sequence, read N- to C-terminus: MEIKDQGAQMEPLLPTRNDEEAVVDRGGTRSILKTHFEKEDLEGHRTLFIGVHVPLGGRKSHRRHRHRGHKHRKRDRERDSGLEDGRESPSFDTPSQRVQFILGTEDDDEEHIPHDLFTELDEICWREGEDAEWRETARWLKFEEDVEDGGERWSKPYVATLSLHSLFELRSCILNGTVLLDMHANTLEEIADMVLDQQVSSGQLNEDVRHRVHEALMKQHHHQNQKKLTNRIPIVRSFADIGKKQSEPNSMDKNAGQVVSPQSAPACVENKNDVSRENSTVDFSKGLGGQQKGHTSPCGMKQRHEKGPPHQQEREVDLHFMKKIPPGAEASNILVGELEFLDRTVVAFVRLSPAVLLQGLAEVPIPTRFLFILLGPLGKGQQYHEIGRSIATLMTDEVFHDVAYKAKDRNDLVSGIDEFLDQVTVLPPGEWDPSIRIEPPKNVPSQEKRKIPAVPNGTAAHGEAEPHGGHSGPELQRTGRIFGGLILDIKRKAPYFWSDFRDAFSLQCLASFLFLYCACMSPVITFGGLLGEATEGRISAIESLFGASMTGIAYSLFGGQPLTILGSTGPVLVFEKILFKFCKEYGLSYLSLRASIGLWTATLCIILVATDASSLVCYITRFTEEAFASLICIIFIYEALEKLFELSEAYPINMHNDLELLTQYSCNCVEPHNPSNGTLKEWRESNISASDIIWENLTVSECKSLHGEYVGRACGHDHPYVPDVLFWSVILFFSTVTLSATLKQFKTSRYFPTKVRSIVSDFAVFLTILCMVLIDYAIGIPSPKLQVPSVFKPTRDDRGWFVTPLGPNPWWTVIAAIIPALLCTILIFMDQQITAVIINRKEHKLKKGCGYHLDLLMVAVMLGVCSIMGLPWFVAATVLSITHVNSLKLESECSAPGEQPKFLGIREQRVTGLMIFILMGSSVFMTSILKFIPMPVLYGVFLYMGASSLKGIQFFDRIKLFWMPAKHQPDFIYLRHVPLRKVHLFTIIQMSCLGLLWIIKVSRAAIVFPMMVLALVFVRKLMDLLFTKRELSWLDDLMPESKKKKLEDAEKEEEQSMLAMEDEGTVQLPLEGHYRDDPSVINISDEMSKTALWRNLLITADNSKDKESSFPSKSSPS.

Disordered stretches follow at residues 1–23, 58–96, 245–312, and 457–476; these read MEIK…EEAV, GRKS…DTPS, KQSE…PPHQ, and NGTA…GPEL. Over 1 to 509 the chain is Cytoplasmic; the sequence is MEIKDQGAQM…DFRDAFSLQC (509 aa). Basic residues predominate over residues 59–76; it reads RKSHRRHRHRGHKHRKRD. Positions 77–90 are enriched in basic and acidic residues; sequence RERDSGLEDGRESP. Residue S89 is modified to Phosphoserine. Residue T94 is modified to Phosphothreonine. The segment covering 248 to 264 has biased composition (polar residues); that stretch reads EPNSMDKNAGQVVSPQS. S276 carries the phosphoserine modification. A helical membrane pass occupies residues 510–530; the sequence is LASFLFLYCACMSPVITFGGL. Topologically, residues 531–538 are extracellular; sequence LGEATEGR. Residues 539–559 form a helical membrane-spanning segment; the sequence is ISAIESLFGASMTGIAYSLFG. At 560–562 the chain is on the cytoplasmic side; sequence GQP. A helical membrane pass occupies residues 563-583; sequence LTILGSTGPVLVFEKILFKFC. Residues 584–596 lie on the Extracellular side of the membrane; that stretch reads KEYGLSYLSLRAS. Residues 597–617 form a helical membrane-spanning segment; sequence IGLWTATLCIILVATDASSLV. The Cytoplasmic segment spans residues 618-626; sequence CYITRFTEE. The helical transmembrane segment at 627–647 threads the bilayer; it reads AFASLICIIFIYEALEKLFEL. The Extracellular segment spans residues 648 to 720; the sequence is SEAYPINMHN…VGRACGHDHP (73 aa). N-linked (GlcNAc...) asparagine glycosylation is found at N674, N677, N687, and N697. Residues 721–741 form a helical membrane-spanning segment; that stretch reads YVPDVLFWSVILFFSTVTLSA. The Cytoplasmic portion of the chain corresponds to 742 to 762; sequence TLKQFKTSRYFPTKVRSIVSD. A helical membrane pass occupies residues 763-783; the sequence is FAVFLTILCMVLIDYAIGIPS. The Extracellular portion of the chain corresponds to 784–809; it reads PKLQVPSVFKPTRDDRGWFVTPLGPN. Residues 810–830 form a helical membrane-spanning segment; the sequence is PWWTVIAAIIPALLCTILIFM. The Cytoplasmic segment spans residues 831–855; it reads DQQITAVIINRKEHKLKKGCGYHLD. A helical membrane pass occupies residues 856–876; sequence LLMVAVMLGVCSIMGLPWFVA. The Extracellular segment spans residues 877-912; that stretch reads ATVLSITHVNSLKLESECSAPGEQPKFLGIREQRVT. The helical transmembrane segment at 913 to 933 threads the bilayer; the sequence is GLMIFILMGSSVFMTSILKFI. The Cytoplasmic portion of the chain corresponds to 934–935; that stretch reads PM. Residues 936–956 traverse the membrane as a helical segment; the sequence is PVLYGVFLYMGASSLKGIQFF. At 957 to 998 the chain is on the extracellular side; that stretch reads DRIKLFWMPAKHQPDFIYLRHVPLRKVHLFTIIQMSCLGLLW. The helical transmembrane segment at 999-1019 threads the bilayer; the sequence is IIKVSRAAIVFPMMVLALVFV. Topologically, residues 1020-1118 are cytoplasmic; the sequence is RKLMDLLFTK…SSFPSKSSPS (99 aa). A phosphoserine mark is found at S1057 and S1085.

It belongs to the anion exchanger (TC 2.A.31) family. In terms of tissue distribution, predominantly expressed in the brain.

Its subcellular location is the basolateral cell membrane. The protein localises to the apical cell membrane. It localises to the cell projection. The protein resides in the dendrite. It is found in the axon. Its subcellular location is the perikaryon. The protein localises to the presynapse. It localises to the postsynapse. It carries out the reaction 2 hydrogencarbonate(out) + chloride(in) + Na(+)(out) = 2 hydrogencarbonate(in) + chloride(out) + Na(+)(in). Functionally, sodium/bicarbonate cotransporter which plays an important role in regulating intracellular pH. Has been shown to act as a sodium/bicarbonate cotransporter in exchange for intracellular chloride. Has also been shown to act as a sodium/biocarbonate cotransporter which does not couple net influx of bicarbonate to net efflux of chloride, with the observed chloride efflux being due to chloride self-exchange. Controls neuronal pH and may contribute to the secretion of cerebrospinal fluid. Acting on presynaptic intracellular pH, it promotes GABA release, reduces the excitability of CA1 pyramidal neurons, and modulates short-term synaptic plasticity. Required in retinal cells to maintain normal pH which is necessary for normal vision. In the kidney, likely to mediate bicarbonate reclamation in the apical membrane of the proximal tubules. The sequence is that of Sodium-driven chloride bicarbonate exchanger from Homo sapiens (Human).